Reading from the N-terminus, the 117-residue chain is Glycoprotein hormones alpha chain (117 aa).

A signal peptide spans 1-23 (MGSVKSAGLSLLLLSFLLYVADS). Disulfide bonds link Cys-34–Cys-57, Cys-37–Cys-86, Cys-54–Cys-107, Cys-58–Cys-109, and Cys-85–Cys-112. 2 N-linked (GlcNAc...) asparagine glycosylation sites follow: Asn-78 and Asn-103.

This sequence belongs to the glycoprotein hormones subunit alpha family. As to quaternary structure, heterodimer. Glycoprotein hormones are heterodimers composed of a common alpha chain described here and a unique beta chain which confers their biological specificity to the different hormones.

The protein resides in the secreted. In terms of biological role, shared alpha chain of heterodimeric glycoprotein hormones. These hormones bind specific receptors on target cells that in turn activate downstream signaling pathways. Involved in gametogenesis and steroidogenesis. This is Glycoprotein hormones alpha chain (cga) from Acanthopagrus latus (Yellowfin seabream).